The chain runs to 82 residues: Small ribosomal subunit protein bS16 (82 aa).

It belongs to the bacterial ribosomal protein bS16 family.

The protein is Small ribosomal subunit protein bS16 of Erwinia tasmaniensis (strain DSM 17950 / CFBP 7177 / CIP 109463 / NCPPB 4357 / Et1/99).